Reading from the N-terminus, the 386-residue chain is Succinate--CoA ligase [ADP-forming] subunit beta (386 aa).

Positions 9–244 constitute an ATP-grasp domain; the sequence is KDLLASYDVP…PSQENVRDVL (236 aa). Residues K46, 53-55, V102, and E107 contribute to the ATP site; that span reads GRG. N199 and D213 together coordinate Mg(2+). Substrate contacts are provided by residues N264 and 321–323; that span reads GIM.

The protein belongs to the succinate/malate CoA ligase beta subunit family. As to quaternary structure, heterotetramer of two alpha and two beta subunits. Mg(2+) is required as a cofactor.

The enzyme catalyses succinate + ATP + CoA = succinyl-CoA + ADP + phosphate. It carries out the reaction GTP + succinate + CoA = succinyl-CoA + GDP + phosphate. Its pathway is carbohydrate metabolism; tricarboxylic acid cycle; succinate from succinyl-CoA (ligase route): step 1/1. Its function is as follows. Succinyl-CoA synthetase functions in the citric acid cycle (TCA), coupling the hydrolysis of succinyl-CoA to the synthesis of either ATP or GTP and thus represents the only step of substrate-level phosphorylation in the TCA. The beta subunit provides nucleotide specificity of the enzyme and binds the substrate succinate, while the binding sites for coenzyme A and phosphate are found in the alpha subunit. The polypeptide is Succinate--CoA ligase [ADP-forming] subunit beta (Chlamydia pneumoniae (Chlamydophila pneumoniae)).